The following is a 253-amino-acid chain: uncharacterized protein (253 aa).

This is an uncharacterized protein from Caenorhabditis elegans.